The primary structure comprises 359 residues: Alanine racemase, biosynthetic (359 aa).

Lysine 34 acts as the Proton acceptor; specific for D-alanine in catalysis. Lysine 34 is modified (N6-(pyridoxal phosphate)lysine). Arginine 129 serves as a coordination point for substrate. The active-site Proton acceptor; specific for L-alanine is the tyrosine 255. A substrate-binding site is contributed by methionine 303.

The protein belongs to the alanine racemase family. As to quaternary structure, monomer but homodimer in the presence of the substrate. Requires pyridoxal 5'-phosphate as cofactor.

It carries out the reaction L-alanine = D-alanine. It functions in the pathway amino-acid biosynthesis; D-alanine biosynthesis; D-alanine from L-alanine: step 1/1. It participates in cell wall biogenesis; peptidoglycan biosynthesis. Its function is as follows. Catalyzes the interconversion of L-alanine and D-alanine. The chain is Alanine racemase, biosynthetic (alr) from Shigella dysenteriae.